Consider the following 240-residue polypeptide: Homeobox protein DLX-4 (240 aa).

Residues 80–120 (QPLCGPAEHPQELEADSEKPRLSPEPSERRPQAPAKKLRKP) form a disordered region. The span at 88-110 (HPQELEADSEKPRLSPEPSERRP) shows a compositional bias: basic and acidic residues. The homeobox DNA-binding region spans 117-176 (LRKPRTIYSSLQLQHLNQRFQHTQYLALPERAQLAAQLGLTQTQVKIWFQNKRSKYKKLL).

The protein belongs to the distal-less homeobox family. As to expression, expressed in leukemia cells and placenta. Also expressed in kidney and fetal liver.

It localises to the nucleus. In terms of biological role, may play a role in determining the production of hemoglobin S. May act as a repressor. During embryonic development, plays a role in palatogenesis. This chain is Homeobox protein DLX-4 (DLX4), found in Homo sapiens (Human).